The following is a 676-amino-acid chain: Rho guanine nucleotide exchange factor 37 (676 aa).

Residues 1-26 (MADFETDEASSKSESPEQEGQGSEDK) are disordered. The DH domain maps to 30 to 213 (HQRLAIRELI…QDVNSNINEY (184 aa)). In terms of domain architecture, BAR spans 254–455 (LKQEAGLVPR…LPHRHVSEPD (202 aa)). 2 consecutive SH3 domains span residues 506–569 (GPGK…LYHP) and 603–666 (PTMS…RTPS). 2 disordered regions span residues 568 to 601 (HPIN…SVPT) and 657 to 676 (PSNF…NLPS).

In terms of biological role, may act as a guanine nucleotide exchange factor (GEF). This chain is Rho guanine nucleotide exchange factor 37 (Arhgef37), found in Rattus norvegicus (Rat).